Consider the following 422-residue polypeptide: Histidine--tRNA ligase (422 aa).

The protein belongs to the class-II aminoacyl-tRNA synthetase family. As to quaternary structure, homodimer.

It is found in the cytoplasm. The enzyme catalyses tRNA(His) + L-histidine + ATP = L-histidyl-tRNA(His) + AMP + diphosphate + H(+). This Vibrio parahaemolyticus serotype O3:K6 (strain RIMD 2210633) protein is Histidine--tRNA ligase.